The chain runs to 379 residues: Queuine tRNA-ribosyltransferase (379 aa).

Aspartate 96 serves as the catalytic Proton acceptor. Substrate-binding positions include 96-100 (DSGGF), aspartate 150, glutamine 196, and glycine 223. An RNA binding region spans residues 254–260 (GIGTPDY). Aspartate 273 acts as the Nucleophile in catalysis. 4 residues coordinate Zn(2+): cysteine 311, cysteine 313, cysteine 316, and histidine 342.

It belongs to the queuine tRNA-ribosyltransferase family. Homodimer. Within each dimer, one monomer is responsible for RNA recognition and catalysis, while the other monomer binds to the replacement base PreQ1. Zn(2+) serves as cofactor.

It carries out the reaction 7-aminomethyl-7-carbaguanine + guanosine(34) in tRNA = 7-aminomethyl-7-carbaguanosine(34) in tRNA + guanine. Its pathway is tRNA modification; tRNA-queuosine biosynthesis. Its function is as follows. Catalyzes the base-exchange of a guanine (G) residue with the queuine precursor 7-aminomethyl-7-deazaguanine (PreQ1) at position 34 (anticodon wobble position) in tRNAs with GU(N) anticodons (tRNA-Asp, -Asn, -His and -Tyr). Catalysis occurs through a double-displacement mechanism. The nucleophile active site attacks the C1' of nucleotide 34 to detach the guanine base from the RNA, forming a covalent enzyme-RNA intermediate. The proton acceptor active site deprotonates the incoming PreQ1, allowing a nucleophilic attack on the C1' of the ribose to form the product. After dissociation, two additional enzymatic reactions on the tRNA convert PreQ1 to queuine (Q), resulting in the hypermodified nucleoside queuosine (7-(((4,5-cis-dihydroxy-2-cyclopenten-1-yl)amino)methyl)-7-deazaguanosine). The polypeptide is Queuine tRNA-ribosyltransferase (Treponema denticola (strain ATCC 35405 / DSM 14222 / CIP 103919 / JCM 8153 / KCTC 15104)).